Here is a 690-residue protein sequence, read N- to C-terminus: Choline transporter-like 1 (690 aa).

The helical transmembrane segment at 23-43 (IFWLVLYVVFWIALIVIAVFS) threads the bilayer. Residue asparagine 134 is glycosylated (N-linked (GlcNAc...) asparagine). 4 helical membrane-spanning segments follow: residues 203–223 (LYKAWPTIVLICALSLVFSIV), 237–259 (WLICIIVVVASVGITGVLWWSYY), 282–302 (ATIYVLAIAATCIMIILLVVI), and 334–354 (LLAFLALSVFLAFWVVVVVCL). An N-linked (GlcNAc...) asparagine glycan is attached at asparagine 391. 4 helical membrane passes run 415–435 (IYIIGLIWTSEFIFACQQLAI), 464–484 (LGSVAKGSLIITIFKIPRLIL), 565–585 (FVLFLGKLAVASICGLISILL), and 594–614 (FYMAPVIIITVFAFFIAHIIL).

Belongs to the CTL (choline transporter-like) family.

The protein localises to the membrane. This chain is Choline transporter-like 1, found in Anopheles gambiae (African malaria mosquito).